Here is a 765-residue protein sequence, read N- to C-terminus: Protein PAT1 homolog 1 (765 aa).

Disordered stretches follow at residues 1–98 (MFRF…DERG), 119–147 (GVGS…LAGP), and 210–244 (LPNR…SPPV). Positions 7-30 (LDDDCTLEEEEGLVEEEDEIDQFN) are enriched in acidic residues. Over residues 45–59 (EEHTRLAELDERVRD) the composition is skewed to basic and acidic residues. Residues 218-227 (SRDEGRDLSE) show a composition bias toward basic and acidic residues. Residues serine 235 and serine 236 each carry the phosphoserine modification. Over residues 235 to 244 (SSPVIGSPPV) the composition is skewed to low complexity.

This sequence belongs to the PAT1 family. In terms of assembly, interacts with ribonucleoprotein complex components.

It is found in the cytoplasm. The protein resides in the P-body. The protein localises to the nucleus. It localises to the PML body. Its subcellular location is the nucleus speckle. Functionally, RNA-binding protein involved in deadenylation-dependent decapping of mRNAs, leading to the degradation of mRNAs. Acts as a scaffold protein that connects deadenylation and decapping machinery. Required for cytoplasmic mRNA processing body (P-body) assembly. The chain is Protein PAT1 homolog 1 (patl1) from Danio rerio (Zebrafish).